Consider the following 1133-residue polypeptide: Guanine nucleotide-binding protein G(s) subunit alpha isoforms XLas (1133 aa).

4 disordered regions span residues 1 to 195, 322 to 552, 611 to 648, and 724 to 744; these read MGMF…PEAL, DDTA…VPGA, SASA…WPDK, and RSRS…RKQM. A compositionally biased stretch (low complexity) spans 31 to 48; sequence LEAPGAAAPGAGAGPAEE. Over residues 347–362 the composition is skewed to basic and acidic residues; the sequence is DKSECAERPPVEREAA. Composition is skewed to low complexity over residues 391–404, 459–471, 482–498, 515–525, and 535–552; these read PEAM…AAQA, GGAA…TPAE, AEPA…ESAS, ATLAEPAARAA, and RAVP…VPGA. Positions 633 to 643 are enriched in pro residues; that stretch reads PPTPRPPPRPT. Over residues 732–744 the composition is skewed to basic and acidic residues; the sequence is KAKDPMEERRKQM. Positions 737-761 form a coiled coil; that stretch reads MEERRKQMRKEAIEMREQKRADKKR. The region spanning 778–1133 is the G-alpha domain; the sequence is CTHRLLLLGA…RMHLRQYELL (356 aa). Positions 781–794 are G1 motif; the sequence is RLLLLGAGESGKST. 786 to 794 lines the GTP pocket; the sequence is GAGESGKST. Ser793 contacts Mg(2+). Residues 807–828 form a disordered region; sequence FNGEGGEEDPQAARSNSDGEKA. Residues 935–943 form a G2 motif region; sequence DLLRCRVLT. Residues 936-943, 962-966, and 1031-1034 contribute to the GTP site; these read LLRCRVLT, DVGGQ, and NKQD. Arg940 is subject to ADP-ribosylarginine; by cholera toxin. Residue Thr943 participates in Mg(2+) binding. Residues 958–967 form a G3 motif region; the sequence is FHMFDVGGQR. The segment at 1027–1034 is G4 motif; that stretch reads ILFLNKQD. Position 1091 is a phosphoserine (Ser1091). Residues 1103 to 1108 form a G5 motif region; sequence TCAVDT. Ala1105 is a binding site for GTP.

This sequence belongs to the G-alpha family. G(s) subfamily. As to quaternary structure, g proteins are composed of 3 units; alpha, beta and gamma. The alpha chain contains the guanine nucleotide binding site. Interacts through its N-terminal region with ALEX which is produced from the same locus in a different open reading frame. This interaction may inhibit its adenylyl cyclase-stimulating activity. Interacts with MAGED2.

It is found in the cell membrane. The protein resides in the apical cell membrane. It catalyses the reaction GTP + H2O = GDP + phosphate + H(+). In terms of biological role, guanine nucleotide-binding proteins (G proteins) function as transducers in numerous signaling pathways controlled by G protein-coupled receptors (GPCRs). The alpha chain contains the guanine nucleotide binding site and alternates between an active, GTP-bound state and an inactive, GDP-bound state. Signaling by an activated GPCR promotes GDP release and GTP binding. The alpha subunit has a low GTPase activity that converts bound GTP to GDP, thereby terminating the signal. Both GDP release and GTP hydrolysis are modulated by numerous regulatory proteins. Signaling involves the activation of adenylyl cyclases, resulting in increased levels of the signaling molecule cAMP. GNAS functions downstream of several GPCRs, including beta-adrenergic receptors. XLas isoforms interact with the same set of receptors as Gnas isoforms. This chain is Guanine nucleotide-binding protein G(s) subunit alpha isoforms XLas, found in Mus musculus (Mouse).